Reading from the N-terminus, the 1130-residue chain is Tyrosine-protein kinase ABL1 (1130 aa).

The interval 1–60 (MLEICLKLVGCKSKKGLSSSSSCYLEEALQRPVASDFEPQGLSEAARWNSKENLLAGPSE) is CAP. A lipid anchor (N-myristoyl glycine) is attached at Leu-2. Ser-50 carries the phosphoserine modification. One can recognise an SH3 domain in the interval 61-121 (NDPNLFVALY…PSNYITPVNS (61 aa)). Phosphotyrosine; by autocatalysis is present on Tyr-70. A phosphotyrosine mark is found at Tyr-115, Tyr-128, Tyr-139, Tyr-172, Tyr-185, and Tyr-215. Residues 127–217 (WYHGPVSRNA…GLITTLHYPA (91 aa)) enclose the SH2 domain. Position 226 is a phosphotyrosine; by autocatalysis (Tyr-226). Ser-229 carries the phosphoserine modification. The Protein kinase domain maps to 242–493 (ITMKHKLGGG…PSFAEIHQAF (252 aa)). Position 248–256 (248–256 (LGGGQYGEV)) interacts with ATP. Residues Tyr-253 and Tyr-257 each carry the phosphotyrosine modification. ATP-binding positions include Lys-271 and 316-322 (EFMTYGN). The active-site Proton acceptor is the Asp-363. The Kinase activation loop signature appears at 381-405 (DFGLSRLMTGDTYTAHAGAKFPIKW). Tyr-393 carries the phosphotyrosine; by autocatalysis and SRC-type Tyr-kinases modification. Tyr-413 bears the Phosphotyrosine mark. 3 positions are modified to phosphoserine: Ser-446, Ser-559, and Ser-569. The disordered stretch occupies residues 518–996 (AVSTLLQAPE…SASSALAGDQ (479 aa)). Basic and acidic residues predominate over residues 537 to 566 (RAAEHRDTTDVPEMPHSKGQGESDPLDHEP). The segment covering 586 to 597 (EDERLLPKDKKT) has biased composition (basic and acidic residues). Positions 605–609 (KKKKK) match the Nuclear localization signal 1 motif. Phosphoserine; by PAK2 is present on residues Ser-618 and Ser-619. Residues Ser-620, Ser-659, and Ser-683 each carry the phosphoserine modification. Over residues 620–640 (SFREMDGQPERRGAGEEEGRD) the composition is skewed to basic and acidic residues. Polar residues predominate over residues 689 to 698 (KSSTLTSSRL). The short motif at 709-715 (SSKRFLR) is the Nuclear localization signal 2 element. Residue Lys-711 is modified to N6-acetyllysine; by EP300. Residue Ser-718 is modified to Phosphoserine. Thr-735 and Thr-751 each carry phosphothreonine. Over residues 740-752 (LQSTGRQFDSSTF) the composition is skewed to polar residues. Basic and acidic residues predominate over residues 755–774 (HKSEKPALPRKRAGENRSDQ). Positions 762 to 769 (LPRKRAGE) match the Nuclear localization signal 3 motif. Thr-781 carries the post-translational modification Phosphothreonine. A compositionally biased stretch (basic and acidic residues) spans 788–802 (KKNEEAADEVFKDIM). A phosphothreonine mark is found at Thr-814, Thr-823, Thr-844, and Thr-852. Ser-855 bears the Phosphoserine mark. The tract at residues 869 to 968 (PAEESRVRRH…VLPATPKPQS (100 aa)) is DNA-binding. The segment covering 881–891 (SSESPGRDKGK) has biased composition (basic and acidic residues). The span at 905–915 (ASAGKAGGKPS) shows a compositional bias: low complexity. Ser-917 is subject to Phosphoserine. Residues 953–1130 (EGLKKPVLPA…VKEISDIVQR (178 aa)) are F-actin-binding. Polar residues predominate over residues 965–975 (KPQSAKPSGTP). Ser-977 bears the Phosphoserine mark. Over residues 984 to 993 (TLPSASSALA) the composition is skewed to low complexity. A Nuclear export signal motif is present at residues 1090 to 1100 (LENNLRELQIC).

This sequence belongs to the protein kinase superfamily. Tyr protein kinase family. ABL subfamily. In terms of assembly, interacts with SORBS1 following insulin stimulation. Found in a trimolecular complex containing CDK5 and CABLES1. Interacts with CABLES1 and PSTPIP1. Interacts with ZDHHC16, ITGB1 and HCK. Interacts with STX17; probably phosphorylates STX17. Interacts with INPPL1/SHIP2. Interacts with the 14-3-3 proteins, YWHAB, YWHAE, YWHAG, YWHAH, SFN and YWHAZ; the interaction with 14-3-3 proteins requires phosphorylation on Thr-735 and, sequesters ABL1 into the cytoplasm. Interacts with ABI1, ABI2, BCR, CRK, FGR, FYN, HCK, LYN, PSMA7 RAD9A, RAD51, RAD52, TP73 and WASF3. A complex made of ABL1, CTTN and MYLK regulates cortical actin-based cytoskeletal rearrangement critical to sphingosine 1-phosphate (S1P)-mediated endothelial cell (EC) barrier enhancement. Interacts (via SH3 domain) with CASP9; the interaction is direct and increases in the response of cells to genotoxic stress and ABL1/c-Abl activation. Found in a complex with ABL1, ABL2, CRK and UNC119; leading to the inhibition of CRK phosphorylation by ABL kinases. Interacts with TBX21. Interacts with NEDD9/HEF1; interaction is induced by CXCL12 promotion of ABL-mediated phosphorylation of NEDD9/HEF1. It depends on Mg(2+) as a cofactor. Post-translationally, acetylated at Lys-711 by EP300 which promotes the cytoplasmic translocation. In terms of processing, phosphorylation at Tyr-70 by members of the SRC family of kinases disrupts SH3 domain-based autoinhibitory interactions and intermolecular associations, such as that with ABI1, and also enhances kinase activity. Phosphorylation at Tyr-226 and Tyr-393 correlate with increased activity. DNA damage-induced activation of ABL1 requires the function of ATM and Ser-446 phosphorylation. Phosphorylation at Ser-569 has been attributed to a CDC2-associated kinase and is coupled to cell division. Phosphorylation at Ser-618 and Ser-619 by PAK2 increases binding to CRK and reduces binding to ABI1. Phosphorylation on Thr-735 is required for binding 14-3-3 proteins for cytoplasmic translocation. Phosphorylated by PRKDC. Polyubiquitinated. Polyubiquitination of ABL1 leads to degradation. Widely expressed.

It is found in the cytoplasm. The protein localises to the cytoskeleton. Its subcellular location is the nucleus. The protein resides in the mitochondrion. It localises to the nucleus membrane. It carries out the reaction L-tyrosyl-[protein] + ATP = O-phospho-L-tyrosyl-[protein] + ADP + H(+). Stabilized in the inactive form by an association between the SH3 domain and the SH2-TK linker region, interactions of the N-terminal cap, and contributions from an N-terminal myristoyl group and phospholipids. Activated by autophosphorylation as well as by SRC-family kinase-mediated phosphorylation. Activated by RIN1 binding to the SH2 and SH3 domains. Also stimulated by cell death inducers and DNA-damage. Phosphatidylinositol 4,5-bisphosphate (PIP2), a highly abundant phosphoinositide known to regulate cytoskeletal and membrane proteins, also inhibits the tyrosine kinase activity. Activated by 5-(1,3-diaryl-1H-pyrazol-4-yl)hydantoin, 5-[3-(4-fluorophenyl)-1-phenyl-1H-pyrazol-4-yl]-2,4-imidazolidinedione (DPH). Inhibited by ABI1, whose activity is controlled by ABL1 itself through tyrosine phosphorylation. Also inhibited by imatinib mesylate (Gleevec) which is used for the treatment of chronic myeloid leukemia (CML), and by VX-680, an inhibitor that also acts on imatinib-resistant mutants. Non-receptor tyrosine-protein kinase that plays a role in many key processes linked to cell growth and survival such as cytoskeleton remodeling in response to extracellular stimuli, cell motility and adhesion, receptor endocytosis, autophagy, DNA damage response and apoptosis. Coordinates actin remodeling through tyrosine phosphorylation of proteins controlling cytoskeleton dynamics like WASF3 (involved in branch formation); ANXA1 (involved in membrane anchoring); DBN1, DBNL, CTTN, RAPH1 and ENAH (involved in signaling); or MAPT and PXN (microtubule-binding proteins). Phosphorylation of WASF3 is critical for the stimulation of lamellipodia formation and cell migration. Involved in the regulation of cell adhesion and motility through phosphorylation of key regulators of these processes such as BCAR1, CRK, CRKL, DOK1, EFS or NEDD9. Phosphorylates multiple receptor tyrosine kinases and more particularly promotes endocytosis of EGFR, facilitates the formation of neuromuscular synapses through MUSK, inhibits PDGFRB-mediated chemotaxis and modulates the endocytosis of activated B-cell receptor complexes. Other substrates which are involved in endocytosis regulation are the caveolin (CAV1) and RIN1. Moreover, ABL1 regulates the CBL family of ubiquitin ligases that drive receptor down-regulation and actin remodeling. Phosphorylation of CBL leads to increased EGFR stability. Involved in late-stage autophagy by regulating positively the trafficking and function of lysosomal components. ABL1 targets to mitochondria in response to oxidative stress and thereby mediates mitochondrial dysfunction and cell death. In response to oxidative stress, phosphorylates serine/threonine kinase PRKD2 at 'Tyr-717'. ABL1 is also translocated in the nucleus where it has DNA-binding activity and is involved in DNA-damage response and apoptosis. Many substrates are known mediators of DNA repair: DDB1, DDB2, ERCC3, ERCC6, RAD9A, RAD51, RAD52 or WRN. Activates the proapoptotic pathway when the DNA damage is too severe to be repaired. Phosphorylates TP73, a primary regulator for this type of damage-induced apoptosis. Phosphorylates the caspase CASP9 on 'Tyr-153' and regulates its processing in the apoptotic response to DNA damage. Phosphorylates PSMA7 that leads to an inhibition of proteasomal activity and cell cycle transition blocks. ABL1 also acts as a regulator of multiple pathological signaling cascades during infection. Several known tyrosine-phosphorylated microbial proteins have been identified as ABL1 substrates. This is the case of A36R of Vaccinia virus, Tir (translocated intimin receptor) of pathogenic E.coli and possibly Citrobacter, CagA (cytotoxin-associated gene A) of H.pylori, or AnkA (ankyrin repeat-containing protein A) of A.phagocytophilum. Pathogens can highjack ABL1 kinase signaling to reorganize the host actin cytoskeleton for multiple purposes, like facilitating intracellular movement and host cell exit. Finally, functions as its own regulator through autocatalytic activity as well as through phosphorylation of its inhibitor, ABI1. Regulates T-cell differentiation in a TBX21-dependent manner. Positively regulates chemokine-mediated T-cell migration, polarization, and homing to lymph nodes and immune-challenged tissues, potentially via activation of NEDD9/HEF1 and RAP1. Phosphorylates TBX21 on tyrosine residues leading to an enhancement of its transcriptional activator activity. The polypeptide is Tyrosine-protein kinase ABL1 (ABL1) (Homo sapiens (Human)).